Consider the following 291-residue polypeptide: BTB/POZ domain-containing protein 19 (291 aa).

Residues 29–98 (SDVRFVVGQE…LYTNSAKLQR (70 aa)) enclose the BTB domain. The region spanning 134 to 234 (CEALQVAVTF…LALLAPAELS (101 aa)) is the BACK domain.

The chain is BTB/POZ domain-containing protein 19 (BTBD19) from Bos taurus (Bovine).